Consider the following 591-residue polypeptide: V-type ATP synthase alpha chain (591 aa).

Residue 233–240 coordinates ATP; the sequence is GPFGAGKT.

It belongs to the ATPase alpha/beta chains family.

The catalysed reaction is ATP + H2O + 4 H(+)(in) = ADP + phosphate + 5 H(+)(out). Functionally, produces ATP from ADP in the presence of a proton gradient across the membrane. The V-type alpha chain is a catalytic subunit. The chain is V-type ATP synthase alpha chain from Streptococcus pyogenes serotype M12 (strain MGAS2096).